We begin with the raw amino-acid sequence, 390 residues long: Cell division protein FtsZ (390 aa).

Residues 21 to 25, 108 to 110, E139, R143, and D187 each bind GTP; these read GGGNN and GTG. The disordered stretch occupies residues 315–390; that stretch reads FDDKPTSHGR…EERRSRRTRR (76 aa). The span at 326–360 shows a compositional bias: polar residues; the sequence is SGSTGFGTSVNTSSNATSKDESFTSNSSNAQATDS. The segment covering 361–384 has biased composition (basic and acidic residues); the sequence is VSERTHTTKEDDIPSFIRNREERR.

This sequence belongs to the FtsZ family. As to quaternary structure, homodimer. Polymerizes to form a dynamic ring structure in a strictly GTP-dependent manner. Interacts directly with several other division proteins.

It localises to the cytoplasm. Its function is as follows. Essential cell division protein that forms a contractile ring structure (Z ring) at the future cell division site. The regulation of the ring assembly controls the timing and the location of cell division. One of the functions of the FtsZ ring is to recruit other cell division proteins to the septum to produce a new cell wall between the dividing cells. Binds GTP and shows GTPase activity. In Staphylococcus aureus (strain NCTC 8325 / PS 47), this protein is Cell division protein FtsZ.